Reading from the N-terminus, the 129-residue chain is Protein Turandot A (129 aa).

The first 21 residues, 1-21, serve as a signal peptide directing secretion; sequence MNSSTALMCFALLLISPLCMG. Asparagine 49 is a glycosylation site (N-linked (GlcNAc...) asparagine).

Belongs to the Turandot family. As to expression, expressed in the fat body (at protein level).

The protein resides in the secreted. In terms of biological role, a humoral factor that plays a role in stress tolerance; gives increased resistance to the lethal effects of bacterial challenge and stress. Regulated by the JAK/STAT pathway and NF-KB-like Relish pathway in the fat body, upd3 in the hemocytes and Mekk1 in response to septic injury and consequent immune response. In Drosophila melanogaster (Fruit fly), this protein is Protein Turandot A.